The following is a 215-amino-acid chain: ATP-dependent Clp protease proteolytic subunit (215 aa).

Ser116 serves as the catalytic Nucleophile. His141 is a catalytic residue.

The protein belongs to the peptidase S14 family. In terms of assembly, fourteen ClpP subunits assemble into 2 heptameric rings which stack back to back to give a disk-like structure with a central cavity, resembling the structure of eukaryotic proteasomes.

It is found in the cytoplasm. It carries out the reaction Hydrolysis of proteins to small peptides in the presence of ATP and magnesium. alpha-casein is the usual test substrate. In the absence of ATP, only oligopeptides shorter than five residues are hydrolyzed (such as succinyl-Leu-Tyr-|-NHMec, and Leu-Tyr-Leu-|-Tyr-Trp, in which cleavage of the -Tyr-|-Leu- and -Tyr-|-Trp bonds also occurs).. In terms of biological role, cleaves peptides in various proteins in a process that requires ATP hydrolysis. Has a chymotrypsin-like activity. Plays a major role in the degradation of misfolded proteins. The sequence is that of ATP-dependent Clp protease proteolytic subunit from Psychrobacter cryohalolentis (strain ATCC BAA-1226 / DSM 17306 / VKM B-2378 / K5).